The following is a 738-amino-acid chain: Eukaryotic translation initiation factor 3 subunit B (738 aa).

The tract at residues 1–120 (MCGCVGVISN…LFIQFKTAQM (120 aa)) is sufficient for interaction with HCR1 and TIF32. Positions 1-245 (MCGCVGVISN…GIQSWGGAQF (245 aa)) are sufficient for interaction with PIC8. One can recognise an RRM domain in the interval 59 to 146 (NFVVVDGAPI…HRLLVNKLSD (88 aa)). 4 WD repeats span residues 211–250 (PRKGFTSKYAKFSPKGTYLFSIHPQGIQSWGGAQFESISK), 322–360 (QKEMPWPLVKWSHDDKYCARQGPGALAIYETPSFQLLDK), 363–406 (VKID…QTAR), and 537–579 (VVDK…ENVR).

This sequence belongs to the eIF-3 subunit B family. As to quaternary structure, component of the eukaryotic translation initiation factor 3 (eIF-3) complex.

The protein resides in the cytoplasm. RNA-binding component of the eukaryotic translation initiation factor 3 (eIF-3) complex, which is involved in protein synthesis of a specialized repertoire of mRNAs and, together with other initiation factors, stimulates binding of mRNA and methionyl-tRNAi to the 40S ribosome. The eIF-3 complex specifically targets and initiates translation of a subset of mRNAs involved in cell proliferation. This chain is Eukaryotic translation initiation factor 3 subunit B, found in Meyerozyma guilliermondii (strain ATCC 6260 / CBS 566 / DSM 6381 / JCM 1539 / NBRC 10279 / NRRL Y-324) (Yeast).